The primary structure comprises 805 residues: Sucrose synthase (805 aa).

A GT-B glycosyltransferase region spans residues 275-752; the sequence is MVFNVVILSP…GLKRIEEKYT (478 aa).

This sequence belongs to the glycosyltransferase 1 family. Plant sucrose synthase subfamily. In terms of tissue distribution, expression is at least 10-fold higher in tubers compared to photosynthetically active tissues.

It catalyses the reaction an NDP-alpha-D-glucose + D-fructose = a ribonucleoside 5'-diphosphate + sucrose + H(+). Its function is as follows. Sucrose-cleaving enzyme that provides UDP-glucose and fructose for various metabolic pathways. This Solanum tuberosum (Potato) protein is Sucrose synthase.